The following is a 1175-amino-acid chain: Major DNA-binding protein (1175 aa).

The segment at 496–509 (CSLCDRASRPACAH) is a zinc-finger region. Positions 825-826 (FW) match the Required for filament formation motif. The required for nuclear localization stretch occupies residues 1151–1175 (KRPPPEDDLFDMGAPPEKRLTFDML).

This sequence belongs to the herpesviridae major DNA-binding protein family. Homooligomers. Forms double-helical filaments necessary for the formation of replication compartments within the host nucleus. Interacts with the origin-binding protein. Interacts with the helicase primase complex; this interaction stimulates primer synthesis activity of the helicase-primase complex. Interacts with the DNA polymerase. Interacts with the alkaline exonuclease; this interaction increases its nuclease processivity.

The protein localises to the host nucleus. Functionally, plays several crucial roles in viral infection. Participates in the opening of the viral DNA origin to initiate replication by interacting with the origin-binding protein. May disrupt loops, hairpins and other secondary structures present on ssDNA to reduce and eliminate pausing of viral DNA polymerase at specific sites during elongation. Promotes viral DNA recombination by performing strand-transfer, characterized by the ability to transfer a DNA strand from a linear duplex to a complementary single-stranded DNA circle. Can also catalyze the renaturation of complementary single strands. Additionally, reorganizes the host cell nucleus, leading to the formation of prereplicative sites and replication compartments. This process is driven by the protein which can form double-helical filaments in the absence of DNA. This is Major DNA-binding protein from Suid herpesvirus 1 (SuHV-1).